Here is a 56-residue protein sequence, read N- to C-terminus: uncharacterized protein (56 aa).

The disordered stretch occupies residues 15–56; sequence SIGNISSGNINNSIGNSSSSGCDDVFNNSTNNNNNNNNNNNK.

This is an uncharacterized protein from Dictyostelium discoideum (Social amoeba).